A 705-amino-acid chain; its full sequence is Protein arginine N-methyltransferase 7 (705 aa).

SAM-dependent MTase PRMT-type domains lie at 29 to 372 and 381 to 705; these read QNSW…YSLW and TKSV…QKKL.

The protein belongs to the class I-like SAM-binding methyltransferase superfamily. Protein arginine N-methyltransferase family. PRMT7 subfamily.

Functionally, essential arginine methyltransferase that can both catalyze the formation of omega-N monomethylarginine (MMA) and symmetrical dimethylarginine (sDMA). Specifically mediates the symmetrical dimethylation of arginine residues in the small nuclear ribonucleoproteins SmD1 and SmD3. This Drosophila simulans (Fruit fly) protein is Protein arginine N-methyltransferase 7 (Art7).